The primary structure comprises 331 residues: Ribose-phosphate pyrophosphokinase (331 aa).

An ATP-binding site is contributed by 55 to 57 (DGE). The Mg(2+) site is built by H148 and D187. K211 is a catalytic residue. D-ribose 5-phosphate contacts are provided by residues R213, D237, and 241–245 (DTAGT).

This sequence belongs to the ribose-phosphate pyrophosphokinase family. Class I subfamily. As to quaternary structure, homohexamer. The cofactor is Mg(2+).

The protein resides in the cytoplasm. It catalyses the reaction D-ribose 5-phosphate + ATP = 5-phospho-alpha-D-ribose 1-diphosphate + AMP + H(+). It functions in the pathway metabolic intermediate biosynthesis; 5-phospho-alpha-D-ribose 1-diphosphate biosynthesis; 5-phospho-alpha-D-ribose 1-diphosphate from D-ribose 5-phosphate (route I): step 1/1. Functionally, involved in the biosynthesis of the central metabolite phospho-alpha-D-ribosyl-1-pyrophosphate (PRPP) via the transfer of pyrophosphoryl group from ATP to 1-hydroxyl of ribose-5-phosphate (Rib-5-P). The chain is Ribose-phosphate pyrophosphokinase from Synechococcus elongatus (strain ATCC 33912 / PCC 7942 / FACHB-805) (Anacystis nidulans R2).